The chain runs to 292 residues: Glutathione S-transferase L2, chloroplastic (292 aa).

Residues 1 to 56 constitute a chloroplast transit peptide; sequence MSVGLKVSAFLHPTLALSSRDVSLSSSSSSLYLDRKILRPGSGRRWCKSRRTEPIL. The region spanning 79-160 is the GST N-terminal domain; sequence GSTRLYISYT…YIDTNFEGPS (82 aa). Glutathione-binding positions include 89 to 90, 117 to 118, 131 to 132, and 144 to 145; these read CP, NR, KV, and ES. The region spanning 130-286 is the GST C-terminal domain; the sequence is NKVPALEHNN…ELVERYKRRV (157 aa).

Belongs to the GST superfamily. Lambda family.

Its subcellular location is the plastid. It localises to the chloroplast. The enzyme catalyses RX + glutathione = an S-substituted glutathione + a halide anion + H(+). In terms of biological role, catalyzes the glutathione-dependent reduction of S-glutathionylquercetin to quercetin. In vitro, possesses glutathione-dependent thiol transferase activity toward 2-hydroxyethyl disulfide (HED). The protein is Glutathione S-transferase L2, chloroplastic (GSTL2) of Arabidopsis thaliana (Mouse-ear cress).